Here is a 168-residue protein sequence, read N- to C-terminus: Photosystem I assembly protein Ycf3 (168 aa).

TPR repeat units lie at residues Ala35–Pro68, Ser72–Leu105, and Gly120–Asn153.

Belongs to the Ycf3 family.

The protein resides in the plastid. It is found in the chloroplast thylakoid membrane. Its function is as follows. Essential for the assembly of the photosystem I (PSI) complex. May act as a chaperone-like factor to guide the assembly of the PSI subunits. This is Photosystem I assembly protein Ycf3 from Lactuca sativa (Garden lettuce).